The following is a 271-amino-acid chain: 2-aminophenol 1,6-dioxygenase subunit alpha (271 aa).

It belongs to the LigB/MhpB extradiol dioxygenase family. The APD complex is a heterotetramer of 2 alpha (CnbCa) and 2 beta (CnbCb) subunits.

It participates in xenobiotic degradation; nitrobenzene degradation. Its pathway is xenobiotic degradation; 4-chloronitrobenzene degradation. In terms of biological role, component of the 2-aminophenol 1,6-dioxygenase (APD) complex that catalyzes the ring fission of 2-aminophenol to produce 2-aminomuconic semialdehyde. CnbCa may have a role in the stability of the complex. The complex is also active on other substrates such as 2-amino-5-chlorophenol (68% activity), protocatechuate (33% activity) and catechol (5% activity). Both 2-aminophenol and 2-amino-5-cholorophenol are likely native substrates for this dioxygenase which is involved in the reductive degradation pathway of both nitrobenzene (NB) and 4-chloronitrobenzene (4-CNB), allowing C.testosteroni strain CNB-1 to grow on these compounds as sole source of carbon, nitrogen, and energy. The protein is 2-aminophenol 1,6-dioxygenase subunit alpha of Comamonas testosteroni (Pseudomonas testosteroni).